We begin with the raw amino-acid sequence, 429 residues long: MFRTHLVSELNPKLDGSEVKVAGWVHNVRNLGGKIFILLRDKSGIGQIVVEKGNNAYDKVINIGLESTIVVNGVVKADARAPNGVEVHAKDIEILSYARSPLPLDVTGKVKADIDTRLRERLLDLRRLEMQAVLKIQSVAVKSFRETLYKHGFVEVFTPKIIASATEGGAQLFPVLYFGKEAFLAQSPQLYKELLAGAIERVFEIAPAWRAEESDTPYHLSEFISMDVEMAFADYNDIMALIEQIIYNMINDVKRECENELKILNYTPPNVRIPIKKVSYSDAIELLKSKGVNIKFGDDIGTPELRVLYNELKEDLYFVTDWPWLSRPFYTKQKKDNPQLSESFDLIFRWLEIVSGSSRNHVKEVLENSLKVRGLNPESFEFFLKWFDYGMPPHAGFGMGLARVMLMLTGLQSVKEVVPFPRDKKRLTP.

Glu167 provides a ligand contact to L-aspartate. The aspartate stretch occupies residues 189–192; it reads QLYK. Arg210 serves as a coordination point for L-aspartate. ATP-binding positions include 210–212 and Glu352; that span reads RAE. Residues Glu352 and Ser355 each coordinate Mg(2+). Positions 355 and 359 each coordinate L-aspartate. ATP is bound at residue 400 to 403; sequence GLAR.

The protein belongs to the class-II aminoacyl-tRNA synthetase family. Type 2 subfamily. Homodimer. The cofactor is Mg(2+).

It is found in the cytoplasm. The enzyme catalyses tRNA(Asx) + L-aspartate + ATP = L-aspartyl-tRNA(Asx) + AMP + diphosphate. In terms of biological role, aspartyl-tRNA synthetase with relaxed tRNA specificity since it is able to aspartylate not only its cognate tRNA(Asp) but also tRNA(Asn). Reaction proceeds in two steps: L-aspartate is first activated by ATP to form Asp-AMP and then transferred to the acceptor end of tRNA(Asp/Asn). The sequence is that of Aspartate--tRNA(Asp/Asn) ligase from Saccharolobus solfataricus (strain ATCC 35092 / DSM 1617 / JCM 11322 / P2) (Sulfolobus solfataricus).